A 370-amino-acid chain; its full sequence is UDP-N-acetylglucosamine--N-acetylmuramyl-(pentapeptide) pyrophosphoryl-undecaprenol N-acetylglucosamine transferase (370 aa).

Residues 10 to 12 (TGG), asparagine 126, serine 200, isoleucine 255, and glutamine 300 each bind UDP-N-acetyl-alpha-D-glucosamine.

Belongs to the glycosyltransferase 28 family. MurG subfamily.

It localises to the cell membrane. The catalysed reaction is Mur2Ac(oyl-L-Ala-gamma-D-Glu-L-Lys-D-Ala-D-Ala)-di-trans,octa-cis-undecaprenyl diphosphate + UDP-N-acetyl-alpha-D-glucosamine = beta-D-GlcNAc-(1-&gt;4)-Mur2Ac(oyl-L-Ala-gamma-D-Glu-L-Lys-D-Ala-D-Ala)-di-trans,octa-cis-undecaprenyl diphosphate + UDP + H(+). Its pathway is cell wall biogenesis; peptidoglycan biosynthesis. In terms of biological role, cell wall formation. Catalyzes the transfer of a GlcNAc subunit on undecaprenyl-pyrophosphoryl-MurNAc-pentapeptide (lipid intermediate I) to form undecaprenyl-pyrophosphoryl-MurNAc-(pentapeptide)GlcNAc (lipid intermediate II). The chain is UDP-N-acetylglucosamine--N-acetylmuramyl-(pentapeptide) pyrophosphoryl-undecaprenol N-acetylglucosamine transferase from Lactobacillus delbrueckii subsp. bulgaricus (strain ATCC 11842 / DSM 20081 / BCRC 10696 / JCM 1002 / NBRC 13953 / NCIMB 11778 / NCTC 12712 / WDCM 00102 / Lb 14).